Reading from the N-terminus, the 664-residue chain is MMTKQALLEVHNLVREFPAGDSTVQILKNINLTIYEGELVAIVGQSGSGKSTLMNILGCLDRPTSGSYKVSGQETGKLEPDDLAKLRREYFGFIFQRYHLLGDLSAEGNVEVPAVYAGVTPAERKQRATALLTELGLGSKTENRPSQLSGGQQQRVSIARALMNGGDVILADEPTGALDSHSGVEVMRILRELNAAGHTVIIVTHDMQVAKNATRIIEISDGKIIADRENIPEYASELNKDPDAAPAIANKQSKGKSVSAFRSMLDRLSEAFQMALISMNAHRMRTFLTMLGIIIGIASVVTVVALGNGSQKQILENISSLGTNTITVFQGRGFGDNSKTANFKTLVPSDADALSSQPYVTAVSPMVSSSKTIRYKENEATATINGVSNDYFDVKGLTFKDGQSFDQRSVRDLTQDVVIDTNTQKQFFTDGSNPIGQVVLLGSVPARIIGIVEPQTSSMGSDDSLNVYMPYTTVMSRMLGQSNVRNIIVRINDQYSTSAAENAIVNLLTLRHGQQDIFTMNSDSIRQTIEKTTSTMTLLVSAIAVISLIVGGIGVMNIMLVSVTERTQEIGVRMAVGARQSDILQQFLIEAILVCLIGGVLGVLLSLGLGQLINKVAAGNFAVAYSTTSIVAAFVCSTLIGVVFGFLPARNAAQLDPVAALSRE.

The region spanning 8–246 (LEVHNLVREF…ELNKDPDAAP (239 aa)) is the ABC transporter domain. 44–51 (GQSGSGKS) serves as a coordination point for ATP. Transmembrane regions (helical) follow at residues 287–307 (FLTMLGIIIGIASVVTVVALG), 543–563 (IAVISLIVGGIGVMNIMLVSV), 587–607 (FLIEAILVCLIGGVLGVLLSL), and 629–649 (SIVAAFVCSTLIGVVFGFLPA).

Belongs to the ABC transporter superfamily. Macrolide exporter (TC 3.A.1.122) family. Homodimer. Part of the tripartite efflux system MacAB-TolC, which is composed of an inner membrane transporter, MacB, a periplasmic membrane fusion protein, MacA, and an outer membrane component, TolC. The complex forms a large protein conduit and can translocate molecules across both the inner and outer membranes. Interacts with MacA.

Its subcellular location is the cell inner membrane. Part of the tripartite efflux system MacAB-TolC. MacB is a non-canonical ABC transporter that contains transmembrane domains (TMD), which form a pore in the inner membrane, and an ATP-binding domain (NBD), which is responsible for energy generation. Confers resistance against macrolides. This is Macrolide export ATP-binding/permease protein MacB from Acinetobacter baylyi (strain ATCC 33305 / BD413 / ADP1).